Consider the following 270-residue polypeptide: Gap junction beta-3 protein (270 aa).

Residues 1–20 (MDWKKLQDLLSGVNQYSTAF) lie on the Cytoplasmic side of the membrane. Residues 21-40 (GRIWLSVVFVFRVLVYVVAA) form a helical membrane-spanning segment. Topologically, residues 41-75 (ERVWGDEQKDFDCNTRQPGCTNVCYDNFFPISNIR) are extracellular. A helical membrane pass occupies residues 76–98 (LWALQLIFVTCPSMLVILHVAYR). Residues 99 to 126 (EERERKHRQKHGEQCAKLYSHPGKKHGG) lie on the Cytoplasmic side of the membrane. Residues 127–149 (LWWTYLFSLIFKLIIELVFLYVL) traverse the membrane as a helical segment. At 150–188 (HTLWHGFTMPRLVQCASIVPCPNTVDCYIARPTEKKVFT) the chain is on the extracellular side. The chain crosses the membrane as a helical span at residues 189 to 211 (YFMVGASAVCIILTICEICYLIF). The Cytoplasmic segment spans residues 212–270 (HRIMRGISKGKSTKSISSPKSSSRASTCRCHHKLLESGDPEADPASEKLQASAPSLTPI). The tract at residues 246-270 (LESGDPEADPASEKLQASAPSLTPI) is disordered.

The protein belongs to the connexin family. Beta-type (group I) subfamily. As to quaternary structure, a connexon is composed of a hexamer of connexins. Interacts with CNST.

The protein localises to the cell membrane. Its subcellular location is the cell junction. The protein resides in the gap junction. Its function is as follows. One gap junction consists of a cluster of closely packed pairs of transmembrane channels, the connexons, through which materials of low MW diffuse from one cell to a neighboring cell. The sequence is that of Gap junction beta-3 protein (Gjb3) from Mus musculus (Mouse).